Reading from the N-terminus, the 286-residue chain is GTP-binding protein 8 (286 aa).

An EngB-type G domain is found at 105–278; the sequence is KQPEVCFMGR…RCFIAHVTGK (174 aa). GTP is bound by residues 113 to 120, 142 to 146, 160 to 163, 222 to 225, and 257 to 259; these read GRSNVGKS, GHTKK, DMPG, TKID, and VSS. Residues S120 and T144 each coordinate Mg(2+).

This sequence belongs to the TRAFAC class TrmE-Era-EngA-EngB-Septin-like GTPase superfamily. EngB GTPase family. The cofactor is Mg(2+).

The chain is GTP-binding protein 8 (gtpbp8) from Danio rerio (Zebrafish).